Consider the following 393-residue polypeptide: AKTTPPSVYPLAPGSAAQTNSMVTLGCLVKGYFPEPVTVTWNSGSLSSGVHTFPAVLQSDLYTLSSSVTVPSSPRPSETVTCNVAHPASSTKVDKKIVPRDCGCKPCICTVPEVSSVFIFPPKPKDVLTITLTPKVTCVVVDISKDDPEVQFSWFVDDVEVHTAQTQPREEQFNSTFRSVSELPIMHQDWLNGKEFKCRVNSAAFPAPIEKTISKTKGRPKAPQVYTIPPPKEQMAKDKVSLTCMITDFFPEDITVEWQWNGQPAENYKNTQPIMNTNGSYFVYSKLNVQKSNWEAGNTFTCSVLHEGLHNHHTEKSLSHSPGLQLDETCAEAQDGELDGLWTTITIFISLFLLSVCYSAAVTLFKVKWIFSSVVELKQTLVPEYKNMIGQAP.

The CH1 stretch occupies residues alanine 1–isoleucine 97. The cysteines at positions 27 and 82 are disulfide-linked. Positions valine 98 to threonine 110 are hinge. Positions valine 111 to lysine 217 are CH2. 2 cysteine pairs are disulfide-bonded: cysteine 138/cysteine 198 and cysteine 244/cysteine 302. A glycan (N-linked (GlcNAc...) asparagine) is linked at asparagine 174. The CH3 stretch occupies residues glycine 218 to leucine 324. Residues glycine 340–cysteine 357 traverse the membrane as a helical segment. The Cytoplasmic segment spans residues tyrosine 358–proline 393.

Its subcellular location is the cell membrane. This chain is Ig gamma-1 chain C region, membrane-bound form (Ighg1), found in Mus musculus (Mouse).